Consider the following 397-residue polypeptide: Phosphoglycerate kinase (397 aa).

Substrate-binding positions include 21-23, Arg-37, 60-63, Arg-119, and Arg-152; these read DFN and HLGR. Residues Lys-203, Gly-294, Glu-325, and 354–357 each bind ATP; that span reads GGDS.

Belongs to the phosphoglycerate kinase family. In terms of assembly, monomer.

The protein resides in the cytoplasm. It catalyses the reaction (2R)-3-phosphoglycerate + ATP = (2R)-3-phospho-glyceroyl phosphate + ADP. It functions in the pathway carbohydrate degradation; glycolysis; pyruvate from D-glyceraldehyde 3-phosphate: step 2/5. In Pelodictyon phaeoclathratiforme (strain DSM 5477 / BU-1), this protein is Phosphoglycerate kinase.